We begin with the raw amino-acid sequence, 124 residues long: MSFDVPDDLQYLESHEWIDPATGRVGISEFAQDELGDVVFVELPSVGDALDQHDELGVVESIKAVSDLYAPVSGEVTAVNDALTNEPELVNEAPFGDGWLVEIDFDSDDLEATLDSDDYRAQIA.

The region spanning 22–104 (TGRVGISEFA…FGDGWLVEID (83 aa)) is the Lipoyl-binding domain. K63 is modified (N6-lipoyllysine).

The protein belongs to the GcvH family. In terms of assembly, the glycine cleavage system is composed of four proteins: P, T, L and H. (R)-lipoate serves as cofactor.

The glycine cleavage system catalyzes the degradation of glycine. The H protein shuttles the methylamine group of glycine from the P protein to the T protein. This is Probable glycine cleavage system H protein from Halobacterium salinarum (strain ATCC 700922 / JCM 11081 / NRC-1) (Halobacterium halobium).